The sequence spans 223 residues: MSSAISRSRFNSFILHTVATANLIWAFNWINHNSDVAIRRSYGSHFQHLTVLSLAVTLLSMVVGLFSDISGSLTLVKLKNILLYIVCPLETIVSILYWSIVSYDRSLLIPKDRPVPLPLNFDISVHLMPTVYTLIDYLFFSPPFSLSIGPSLLVYLSIAVSYMLWVEKCYQMNKFYAYPILAILDPIKKTIFYTVASIISFSCYIVLKMVHPYALPSGAPPRS.

Transmembrane regions (helical) follow at residues 10 to 30 (FNSFILHTVATANLIWAFNWI), 49 to 69 (LTVLSLAVTLLSMVVGLFSDI), 81 to 101 (ILLYIVCPLETIVSILYWSIV), 146 to 166 (LSIGPSLLVYLSIAVSYMLWV), and 190 to 210 (TIFYTVASIISFSCYIVLKMV).

This sequence belongs to the UPF0641 family.

Its subcellular location is the endoplasmic reticulum membrane. The protein is UPF0641 membrane protein PJ4664.05 of Schizosaccharomyces pombe (strain 972 / ATCC 24843) (Fission yeast).